A 753-amino-acid polypeptide reads, in one-letter code: Elongin-A2 (753 aa).

In terms of domain architecture, TFIIS N-terminal spans 5-80; sequence STTLHAVEKL…ARWKKLVLVD (76 aa). Disordered regions lie at residues 80-245, 261-453, and 477-497; these read DRNT…DWHS, ETPR…GPKT, and LSDS…SPKF. Basic and acidic residues-rich tracts occupy residues 147–157 and 271–285; these read HSREPRAERKC and ARDR…DKEG. Over residues 306–317 the composition is skewed to basic residues; the sequence is KRPQHSHSNKKR. A compositionally biased stretch (basic and acidic residues) spans 333–348; that stretch reads SPEEKEQLSNDRETQE. A compositionally biased stretch (acidic residues) spans 366–377; that stretch reads EVEEVDMAEEFE. The segment covering 409 to 428 has biased composition (basic and acidic residues); it reads DKQRKANESKGTRESWDSAK. The segment at 500 to 659 is activation domain; sequence EAAFPGRRVN…TPYDTSRRQE (160 aa). Residues 528–537 are BC-box; sequence TLRQQCAQVL. An interacting with Elongin BC complex region spans residues 528–537; sequence TLRQQCAQVL. The tract at residues 650-735 is disordered; that stretch reads TPYDTSRRQE…KTRKQAAKKV (86 aa). Residues 654–663 are compositionally biased toward basic and acidic residues; sequence TSRRQEKSAG. A compositionally biased stretch (low complexity) spans 680–700; that stretch reads GSSHTPSSQSSSGGGRDSSSS.

As to quaternary structure, heterotrimer of an A (ELOA, ELOA2 or ELOA3P), ELOB and ELOC subunit. Specifically expressed in testis.

Its subcellular location is the nucleus. SIII, also known as elongin, is a general transcription elongation factor that increases the RNA polymerase II transcription elongation past template-encoded arresting sites. Subunit A2 is transcriptionally active but its transcription activity is not enhanced by binding to the dimeric complex of the SIII regulatory subunits B and C (elongin BC complex). The sequence is that of Elongin-A2 from Homo sapiens (Human).